The primary structure comprises 896 residues: Glutamate receptor 2.4 (896 aa).

Residues Met-1–Gly-24 form the signal peptide. The Extracellular portion of the chain corresponds to Gln-25–Thr-565. N-linked (GlcNAc...) asparagine glycans are attached at residues Asn-26, Asn-46, Asn-53, Asn-204, Asn-267, Asn-331, Asn-341, and Asn-527. A helical membrane pass occupies residues Pro-566–Leu-586. Topologically, residues Glu-587–Thr-595 are cytoplasmic. The chain crosses the membrane as a helical span at residues Gly-596–Ala-616. Residues Pro-617–Arg-620 lie on the Cytoplasmic side of the membrane. Residues Val-621–Thr-641 form a helical membrane-spanning segment. The Extracellular portion of the chain corresponds to Gln-642–Ser-815. The chain crosses the membrane as a helical span at residues Phe-816–Ile-836. Over Cys-837 to Gly-896 the chain is Cytoplasmic.

The protein belongs to the glutamate-gated ion channel (TC 1.A.10.1) family. As to quaternary structure, may form heteromers. In terms of tissue distribution, expressed predominantly in roots.

The protein localises to the membrane. Functionally, glutamate-gated receptor that probably acts as a non-selective cation channel. May be involved in light-signal transduction and calcium homeostasis via the regulation of calcium influx into cells. The sequence is that of Glutamate receptor 2.4 (GLR2.4) from Arabidopsis thaliana (Mouse-ear cress).